A 353-amino-acid polypeptide reads, in one-letter code: Photosystem II D2 protein (353 aa).

N-acetylthreonine is present on T2. T2 is modified (phosphothreonine). Residues 41–61 (CAYFALGGWFTGTTFVTSWYT) traverse the membrane as a helical segment. H118 is a binding site for chlorophyll a. A helical transmembrane segment spans residues 125 to 141 (GFMLRQFELARSVQLRP). The pheophytin a site is built by Q130 and N143. The helical transmembrane segment at 153–166 (VFVSVFLIYPLGQS) threads the bilayer. Chlorophyll a is bound at residue H198. The chain crosses the membrane as a helical span at residues 208-228 (AALLCAIHGATVENLYFEDGD). The a plastoquinone site is built by H215 and F262. H215 provides a ligand contact to Fe cation. H269 contributes to the Fe cation binding site. A helical membrane pass occupies residues 279–295 (GLWMSALGVVGLALNLR).

Belongs to the reaction center PufL/M/PsbA/D family. In terms of assembly, PSII is composed of 1 copy each of membrane proteins PsbA, PsbB, PsbC, PsbD, PsbE, PsbF, PsbH, PsbI, PsbJ, PsbK, PsbL, PsbM, PsbT, PsbX, PsbY, PsbZ, Psb30/Ycf12, at least 3 peripheral proteins of the oxygen-evolving complex and a large number of cofactors. It forms dimeric complexes. Requires The D1/D2 heterodimer binds P680, chlorophylls that are the primary electron donor of PSII, and subsequent electron acceptors. It shares a non-heme iron and each subunit binds pheophytin, quinone, additional chlorophylls, carotenoids and lipids. There is also a Cl(-1) ion associated with D1 and D2, which is required for oxygen evolution. The PSII complex binds additional chlorophylls, carotenoids and specific lipids. as cofactor.

The protein resides in the plastid. The protein localises to the chloroplast thylakoid membrane. It catalyses the reaction 2 a plastoquinone + 4 hnu + 2 H2O = 2 a plastoquinol + O2. Functionally, photosystem II (PSII) is a light-driven water:plastoquinone oxidoreductase that uses light energy to abstract electrons from H(2)O, generating O(2) and a proton gradient subsequently used for ATP formation. It consists of a core antenna complex that captures photons, and an electron transfer chain that converts photonic excitation into a charge separation. The D1/D2 (PsbA/PsbD) reaction center heterodimer binds P680, the primary electron donor of PSII as well as several subsequent electron acceptors. D2 is needed for assembly of a stable PSII complex. In Panax ginseng (Korean ginseng), this protein is Photosystem II D2 protein.